A 492-amino-acid chain; its full sequence is Argininosuccinate lyase (492 aa).

Belongs to the lyase 1 family. Argininosuccinate lyase subfamily.

The protein localises to the cytoplasm. It carries out the reaction 2-(N(omega)-L-arginino)succinate = fumarate + L-arginine. The protein operates within amino-acid biosynthesis; L-arginine biosynthesis; L-arginine from L-ornithine and carbamoyl phosphate: step 3/3. The sequence is that of Argininosuccinate lyase from Methanocorpusculum labreanum (strain ATCC 43576 / DSM 4855 / Z).